We begin with the raw amino-acid sequence, 144 residues long: MSARTKARKRALDLLFSADVRQISLAHALAVEAERAANEPAREASWLYAREIVDGVIDNQEEIDEQIETYAQGWTLARMPAVDRAILRIGVWELLFNDQVPDGVAISEAVEAATVLSTDDSAGFVNGLLAKIAQNKPRDGEVDR.

This sequence belongs to the NusB family.

Functionally, involved in transcription antitermination. Required for transcription of ribosomal RNA (rRNA) genes. Binds specifically to the boxA antiterminator sequence of the ribosomal RNA (rrn) operons. This is Transcription antitermination protein NusB from Leifsonia xyli subsp. xyli (strain CTCB07).